The primary structure comprises 143 residues: Transcriptional regulatory protein RosR (143 aa).

The C2H3-type zinc-finger motif lies at 79–97; that stretch reads CLECGGNFKSLKRHLMTHH.

It belongs to the ros/MucR family.

The polypeptide is Transcriptional regulatory protein RosR (rosR) (Rhizobium etli (strain ATCC 51251 / DSM 11541 / JCM 21823 / NBRC 15573 / CFN 42)).